We begin with the raw amino-acid sequence, 64 residues long: UPF0434 protein BAB2_0345 (64 aa).

Belongs to the UPF0434 family.

This chain is UPF0434 protein BAB2_0345, found in Brucella abortus (strain 2308).